Here is a 192-residue protein sequence, read N- to C-terminus: Elongation factor P (192 aa).

It belongs to the elongation factor P family.

The protein resides in the cytoplasm. Its pathway is protein biosynthesis; polypeptide chain elongation. Its function is as follows. Involved in peptide bond synthesis. Stimulates efficient translation and peptide-bond synthesis on native or reconstituted 70S ribosomes in vitro. Probably functions indirectly by altering the affinity of the ribosome for aminoacyl-tRNA, thus increasing their reactivity as acceptors for peptidyl transferase. The polypeptide is Elongation factor P (Borrelia turicatae (strain 91E135)).